Here is a 159-residue protein sequence, read N- to C-terminus: SsrA-binding protein (159 aa).

This sequence belongs to the SmpB family.

Its subcellular location is the cytoplasm. Its function is as follows. Required for rescue of stalled ribosomes mediated by trans-translation. Binds to transfer-messenger RNA (tmRNA), required for stable association of tmRNA with ribosomes. tmRNA and SmpB together mimic tRNA shape, replacing the anticodon stem-loop with SmpB. tmRNA is encoded by the ssrA gene; the 2 termini fold to resemble tRNA(Ala) and it encodes a 'tag peptide', a short internal open reading frame. During trans-translation Ala-aminoacylated tmRNA acts like a tRNA, entering the A-site of stalled ribosomes, displacing the stalled mRNA. The ribosome then switches to translate the ORF on the tmRNA; the nascent peptide is terminated with the 'tag peptide' encoded by the tmRNA and targeted for degradation. The ribosome is freed to recommence translation, which seems to be the essential function of trans-translation. The chain is SsrA-binding protein from Coxiella burnetii (strain CbuK_Q154) (Coxiella burnetii (strain Q154)).